The sequence spans 607 residues: COMPASS component cclA (607 aa).

The segment covering 1–19 (MASTHAAGSPAPSSSINSP) has biased composition (low complexity). Disordered regions lie at residues 1–22 (MASTHAAGSPAPSSSINSPILH) and 34–86 (GEGS…KSVA). The span at 57-69 (SKRNKRDSRKKRE) shows a compositional bias: basic residues. The B30.2/SPRY domain occupies 157–376 (IADTDFPHIK…YAFNLKETPA (220 aa)). The segment at 587-607 (NTPITDVPVPPEPEDTPMTGG) is disordered.

It belongs to the cclA family. In terms of assembly, component of the COMPASS complex.

It localises to the nucleus. It is found in the chromosome. Its subcellular location is the telomere. In terms of biological role, component of the COMPASS (Set1C) complex that specifically mono-, di- and trimethylates histone H3 to form H3K4me1/2/3, which subsequently plays a role in telomere length maintenance and transcription elongation regulation. Controls the production of several secondary metabolites, including monodictyphenone, emodin and emodin derivatives, as well as two anti-osteoporosis polyketides, F9775A and F9775B. The protein is COMPASS component cclA of Emericella nidulans (strain FGSC A4 / ATCC 38163 / CBS 112.46 / NRRL 194 / M139) (Aspergillus nidulans).